The sequence spans 178 residues: MTQLSSNDVPSMGRRQFMNLLTFGTATGVALGALYPVANYFMPLRAGGGGGGTSAKDELGNPVTKTGWLANHQAGDRSLVQGLKGDPTYLIVNSEGDIGEFGLNAICTHLGCVVPWDSGANKFICPCHGSQYDTNGKVVRGPAPLSLALAHVDVDDDAVLVKQWSETDFRTNENPWWA.

The chain crosses the membrane as a helical span at residues 20–42 (LLTFGTATGVALGALYPVANYFM). The region spanning 65-161 (KTGWLANHQA…VDVDDDAVLV (97 aa)) is the Rieske domain. Residues cysteine 107, histidine 109, cysteine 125, and histidine 128 each contribute to the [2Fe-2S] cluster site. Cysteine 112 and cysteine 127 form a disulfide bridge.

This sequence belongs to the Rieske iron-sulfur protein family. As to quaternary structure, the 4 large subunits of the cytochrome b6-f complex are cytochrome b6, subunit IV (17 kDa polypeptide, PetD), cytochrome f and the Rieske protein, while the 4 small subunits are PetG, PetL, PetM and PetN. The complex functions as a dimer. [2Fe-2S] cluster is required as a cofactor.

Its subcellular location is the cellular thylakoid membrane. It catalyses the reaction 2 oxidized [plastocyanin] + a plastoquinol + 2 H(+)(in) = 2 reduced [plastocyanin] + a plastoquinone + 4 H(+)(out). Functionally, component of the cytochrome b6-f complex, which mediates electron transfer between photosystem II (PSII) and photosystem I (PSI), cyclic electron flow around PSI, and state transitions. This is Cytochrome b6-f complex iron-sulfur subunit from Prochlorococcus marinus (strain MIT 9515).